A 340-amino-acid polypeptide reads, in one-letter code: NADPH dehydrogenase (340 aa).

23-26 is an FMN binding site; it reads SPMC. Y28 is a substrate binding site. Residues A60 and Q102 each contribute to the FMN site. Residue 164-167 coordinates substrate; it reads HAAH. FMN is bound by residues R215 and 307–308; that span reads GR.

The protein belongs to the NADH:flavin oxidoreductase/NADH oxidase family. NamA subfamily. In terms of assembly, homotetramer. Requires FMN as cofactor.

It carries out the reaction A + NADPH + H(+) = AH2 + NADP(+). Catalyzes the reduction of the double bond of an array of alpha,beta-unsaturated aldehydes and ketones. It also reduces the nitro group of nitroester and nitroaromatic compounds. It could have a role in detoxification processes. This Geobacillus thermodenitrificans (strain NG80-2) protein is NADPH dehydrogenase.